A 199-amino-acid polypeptide reads, in one-letter code: ATP-dependent Clp protease proteolytic subunit (199 aa).

The active-site Nucleophile is serine 99. Histidine 124 is a catalytic residue.

Belongs to the peptidase S14 family. Fourteen ClpP subunits assemble into 2 heptameric rings which stack back to back to give a disk-like structure with a central cavity, resembling the structure of eukaryotic proteasomes.

The protein localises to the cytoplasm. It carries out the reaction Hydrolysis of proteins to small peptides in the presence of ATP and magnesium. alpha-casein is the usual test substrate. In the absence of ATP, only oligopeptides shorter than five residues are hydrolyzed (such as succinyl-Leu-Tyr-|-NHMec, and Leu-Tyr-Leu-|-Tyr-Trp, in which cleavage of the -Tyr-|-Leu- and -Tyr-|-Trp bonds also occurs).. Cleaves peptides in various proteins in a process that requires ATP hydrolysis. Has a chymotrypsin-like activity. Plays a major role in the degradation of misfolded proteins. This Lactococcus lactis subsp. cremoris (strain SK11) protein is ATP-dependent Clp protease proteolytic subunit.